The following is a 60-amino-acid chain: MDPCDCAKTGTCNCGTSCTCANCSCTKCKKSCCECCPSGCSKCASGCACKDKTCDTNCCQ.

The tract at residues 1–28 (MDPCDCAKTGTCNCGTSCTCANCSCTKC) is beta. Residues Cys4, Cys6, Cys12, Cys14, Cys18, Cys20, Cys23, Cys25, Cys28, Cys32, Cys33, Cys35, Cys36, Cys40, Cys43, Cys47, Cys49, Cys54, Cys58, and Cys59 each coordinate a divalent metal cation. Positions 29 to 60 (KKSCCECCPSGCSKCASGCACKDKTCDTNCCQ) are alpha.

It belongs to the metallothionein superfamily. Type 1 family.

In terms of biological role, metallothioneins have a high content of cysteine residues that bind various heavy metals. This chain is Metallothionein (mt), found in Gadus morhua (Atlantic cod).